The sequence spans 68 residues: Putative membrane protein insertion efficiency factor (68 aa).

It belongs to the UPF0161 family.

The protein localises to the cell membrane. In terms of biological role, could be involved in insertion of integral membrane proteins into the membrane. The sequence is that of Putative membrane protein insertion efficiency factor from Syntrophomonas wolfei subsp. wolfei (strain DSM 2245B / Goettingen).